A 266-amino-acid polypeptide reads, in one-letter code: Glucosamine-6-phosphate deaminase (266 aa).

The Proton acceptor; for enolization step role is filled by Asp72. Asp141 functions as the For ring-opening step in the catalytic mechanism. Catalysis depends on His143, which acts as the Proton acceptor; for ring-opening step. The active-site For ring-opening step is the Glu148.

The protein belongs to the glucosamine/galactosamine-6-phosphate isomerase family. NagB subfamily. In terms of assembly, homohexamer.

It carries out the reaction alpha-D-glucosamine 6-phosphate + H2O = beta-D-fructose 6-phosphate + NH4(+). It participates in amino-sugar metabolism; N-acetylneuraminate degradation; D-fructose 6-phosphate from N-acetylneuraminate: step 5/5. Its activity is regulated as follows. Allosterically activated by N-acetylglucosamine 6-phosphate (GlcNAc6P). Catalyzes the reversible isomerization-deamination of glucosamine 6-phosphate (GlcN6P) to form fructose 6-phosphate (Fru6P) and ammonium ion. The sequence is that of Glucosamine-6-phosphate deaminase from Klebsiella pneumoniae (strain 342).